The primary structure comprises 378 residues: Cytochrome b (378 aa).

Transmembrane regions (helical) follow at residues 32–52, 76–97, 112–132, and 177–197; these read FGSL…FLAM, WLIR…FLHV, WNIG…GYVL, and FFAF…VHLL. Residues His-82 and His-96 each contribute to the heme b site. 2 residues coordinate heme b: His-181 and His-195. His-200 contacts a ubiquinone. Transmembrane regions (helical) follow at residues 225 to 245, 287 to 307, 319 to 339, and 346 to 366; these read IKDA…VLFF, LGGV…PILH, LSQC…WIGG, and FITI…FALP.

Belongs to the cytochrome b family. As to quaternary structure, the cytochrome bc1 complex contains 11 subunits: 3 respiratory subunits (MT-CYB, CYC1 and UQCRFS1), 2 core proteins (UQCRC1 and UQCRC2) and 6 low-molecular weight proteins (UQCRH/QCR6, UQCRB/QCR7, UQCRQ/QCR8, UQCR10/QCR9, UQCR11/QCR10 and a cleavage product of UQCRFS1). This cytochrome bc1 complex then forms a dimer. Heme b serves as cofactor.

The protein localises to the mitochondrion inner membrane. Its function is as follows. Component of the ubiquinol-cytochrome c reductase complex (complex III or cytochrome b-c1 complex) that is part of the mitochondrial respiratory chain. The b-c1 complex mediates electron transfer from ubiquinol to cytochrome c. Contributes to the generation of a proton gradient across the mitochondrial membrane that is then used for ATP synthesis. This Sciurus aberti (Abert's squirrel) protein is Cytochrome b (MT-CYB).